The sequence spans 428 residues: Growth/differentiation factor 2 (428 aa).

A signal peptide spans Met1 to Gln22. Residues Lys23–Arg318 constitute a propeptide that is removed on maturation. Asn70 and Asn135 each carry an N-linked (GlcNAc...) asparagine glycan. Cys155 and Cys236 form a disulfide bridge. The N-linked (GlcNAc...) asparagine glycan is linked to Asn262. Intrachain disulfides connect Cys326–Cys392, Cys355–Cys425, and Cys359–Cys427. Residues Ser401–Tyr415 are interaction with ENG.

Belongs to the TGF-beta family. Homodimer; disulfide-linked. Detected in extracellular fluid as mature homodimer, and in complex with its propeptide. Interacts with ACVRL1, BMPR2 and ACVR2B with high affinity (in vitro). Identified in a complex with ACVRL1 and ACVR2B. Has ten times lower affinity for ACVR2A (in vitro). Interacts with ENG, forming a heterotetramer with a 2:2 stoichiometry. Can form a heteromeric complex with ENG and ACVRL1. Interacts with type I receptor ACVR1. A reversible disulfide bond can be formed between the two subunits in the homodimer; this has no effect on GDF2 activity.

It localises to the secreted. In terms of biological role, potent circulating inhibitor of angiogenesis. Signals through the type I activin receptor ACVRL1 but not other Alks. Signaling through SMAD1 in endothelial cells requires TGF-beta coreceptor endoglin/ENG. The polypeptide is Growth/differentiation factor 2 (Gdf2) (Mus musculus (Mouse)).